We begin with the raw amino-acid sequence, 146 residues long: SMR1 protein (146 aa).

Positions 1 to 22 (MKSLYLIFGLWILLACFQSGEG) are cleaved as a signal peptide. 2 disordered regions span residues 23–43 (VRGP…TLPH) and 99–146 (TAPD…GGGK). Polar residues predominate over residues 109 to 139 (PPTQLHSTEQANTKTDAKISNTTATTQNSTD). Asn129 and Asn136 each carry an N-linked (GlcNAc...) asparagine glycan.

In terms of processing, several O-linked glycosylation sites might be present in the C-terminal part. Expressed predominantly in the acinar cells of the submandibular gland and to lesser extent in the prostate.

It is found in the secreted. In terms of biological role, sialorphin may be involved in the modulation of mineral balance between at least four systems: kidney, bone, tooth and circulation. Submandibular gland peptide T is able to directly or indirectly down-regulate cardiovascular depression induced by septic shock (endotoxin stimuli), or anaphylactic challenge (nematode antigen sensitization). Its function is as follows. Sialorphin is an endogenous inhibitor of neprilysin. Inhibits the breakdown of Met-enkephalin and substance P in isolated tissue from the dorsal zone of the rat spinal cord. Has an analgesic effect when administered to rats by intravenous injection. The chain is SMR1 protein (Vcsa1) from Rattus norvegicus (Rat).